A 167-amino-acid chain; its full sequence is Translationally-controlled tumor protein homolog (167 aa).

The 167-residue stretch at methionine 1–isoleucine 167 folds into the TCTP domain.

Belongs to the TCTP family.

The protein localises to the cytoplasm. Its subcellular location is the cytoskeleton. Its function is as follows. Involved in protein synthesis. Involved in microtubule stabilization. The chain is Translationally-controlled tumor protein homolog from Mycosarcoma maydis (Corn smut fungus).